The chain runs to 211 residues: Chaperone protein TorD (211 aa).

This sequence belongs to the TorD/DmsD family. TorD subfamily.

It localises to the cytoplasm. In terms of biological role, involved in the biogenesis of TorA. Acts on TorA before the insertion of the molybdenum cofactor and, as a result, probably favors a conformation of the apoenzyme that is competent for acquiring the cofactor. In Shewanella loihica (strain ATCC BAA-1088 / PV-4), this protein is Chaperone protein TorD.